The chain runs to 831 residues: Translation initiation factor IF-2 (831 aa).

In terms of domain architecture, tr-type G spans 329–499; the sequence is TRAPVVTVMG…LLIAEMQDLK (171 aa). A G1 region spans residues 338 to 345; sequence GHVDHGKT. 338-345 serves as a coordination point for GTP; it reads GHVDHGKT. Positions 363 to 367 are G2; the sequence is GITQH. The tract at residues 385 to 388 is G3; that stretch reads DTPG. Residues 385-389 and 439-442 each bind GTP; these read DTPGH and NKID. The interval 439-442 is G4; the sequence is NKID. Residues 475-477 are G5; that stretch reads SAL.

This sequence belongs to the TRAFAC class translation factor GTPase superfamily. Classic translation factor GTPase family. IF-2 subfamily.

The protein localises to the cytoplasm. One of the essential components for the initiation of protein synthesis. Protects formylmethionyl-tRNA from spontaneous hydrolysis and promotes its binding to the 30S ribosomal subunits. Also involved in the hydrolysis of GTP during the formation of the 70S ribosomal complex. In Rickettsia massiliae (strain Mtu5), this protein is Translation initiation factor IF-2.